The sequence spans 212 residues: Pyrrolidone-carboxylate peptidase (212 aa).

Residues E80, C143, and H165 contribute to the active site.

This sequence belongs to the peptidase C15 family. As to quaternary structure, homotetramer.

Its subcellular location is the cytoplasm. It carries out the reaction Release of an N-terminal pyroglutamyl group from a polypeptide, the second amino acid generally not being Pro.. Its function is as follows. Removes 5-oxoproline from various penultimate amino acid residues except L-proline. The sequence is that of Pyrrolidone-carboxylate peptidase from Vibrio parahaemolyticus serotype O3:K6 (strain RIMD 2210633).